The following is a 371-amino-acid chain: Glycerol-3-phosphate dehydrogenase [NAD(+)] 2 (371 aa).

NAD(+) is bound by residues 18–23 (GSGNWG), Phe50, and Phe106. Position 129 (Lys129) interacts with substrate. Ala162 contacts NAD(+). Lys222 serves as the catalytic Proton acceptor. 2 residues coordinate NAD(+): Arg294 and Gln323. 294-295 (RN) is a binding site for substrate.

The protein belongs to the NAD-dependent glycerol-3-phosphate dehydrogenase family. Interacts with human CFH/complement factor H; the interaction is direct and enables the pathogen to evade the host innate immune system. Interacts with human CFHR1/complement factor H-related protein 1; the interaction is direct. Interacts with human PLG/plasminogen; the interaction is direct and provides active plasmin on the surface of fungal cells.

The protein localises to the secreted. It localises to the cell wall. Its subcellular location is the cytoplasm. It is found in the peroxisome. The catalysed reaction is sn-glycerol 3-phosphate + NAD(+) = dihydroxyacetone phosphate + NADH + H(+). In terms of biological role, may catalyze the production and accumulation of glycerol during hyperosmotic stress conditions. Glycerol acts as a osmoregulator that prevents loss of water and turgor of the cells. Mediates evasion of the host innate immune system by binding inhibitory components of the host alternative complement system, in a manner dependent on estrogen-induced inhibition of EBP1. The polypeptide is Glycerol-3-phosphate dehydrogenase [NAD(+)] 2 (Candida albicans (strain SC5314 / ATCC MYA-2876) (Yeast)).